We begin with the raw amino-acid sequence, 284 residues long: Probable endonuclease 4 (284 aa).

Positions 69, 109, 145, 179, 182, 216, 229, 231, and 261 each coordinate Zn(2+).

It belongs to the AP endonuclease 2 family. Zn(2+) serves as cofactor.

It carries out the reaction Endonucleolytic cleavage to 5'-phosphooligonucleotide end-products.. Functionally, endonuclease IV plays a role in DNA repair. It cleaves phosphodiester bonds at apurinic or apyrimidinic (AP) sites, generating a 3'-hydroxyl group and a 5'-terminal sugar phosphate. In Klebsiella pneumoniae (strain 342), this protein is Probable endonuclease 4.